The sequence spans 562 residues: Potassium-transporting ATPase potassium-binding subunit (562 aa).

A run of 12 helical transmembrane segments spans residues 6–26, 62–82, 132–152, 170–190, 253–273, 283–303, 327–347, 356–376, 379–399, 416–436, 483–503, and 526–546; these read FLLI…LGSF, YALA…ALLM, GLAV…FALI, VFRI…LFFV, FVQM…FGQV, LIWA…YAEL, FGIL…CGAV, ALGG…FGGV, GLYG…LMIG, MTAL…ALAI, LLLA…VLAI, and LFIG…FVPA.

It belongs to the KdpA family. The system is composed of three essential subunits: KdpA, KdpB and KdpC.

It is found in the cell inner membrane. In terms of biological role, part of the high-affinity ATP-driven potassium transport (or Kdp) system, which catalyzes the hydrolysis of ATP coupled with the electrogenic transport of potassium into the cytoplasm. This subunit binds the periplasmic potassium ions and delivers the ions to the membrane domain of KdpB through an intramembrane tunnel. This is Potassium-transporting ATPase potassium-binding subunit from Serratia proteamaculans (strain 568).